A 375-amino-acid polypeptide reads, in one-letter code: Queuine tRNA-ribosyltransferase (375 aa).

The active-site Proton acceptor is D89. Substrate is bound by residues 89–93, D143, Q187, and G214; that span reads DSGGF. The segment at 245–251 is RNA binding; it reads GVGKPED. Residue D264 is the Nucleophile of the active site. Residues 269 to 273 form an RNA binding; important for wobble base 34 recognition region; that stretch reads TRNAR. The Zn(2+) site is built by C302, C304, C307, and H333.

This sequence belongs to the queuine tRNA-ribosyltransferase family. Homodimer. Within each dimer, one monomer is responsible for RNA recognition and catalysis, while the other monomer binds to the replacement base PreQ1. The cofactor is Zn(2+).

It catalyses the reaction 7-aminomethyl-7-carbaguanine + guanosine(34) in tRNA = 7-aminomethyl-7-carbaguanosine(34) in tRNA + guanine. It participates in tRNA modification; tRNA-queuosine biosynthesis. Functionally, catalyzes the base-exchange of a guanine (G) residue with the queuine precursor 7-aminomethyl-7-deazaguanine (PreQ1) at position 34 (anticodon wobble position) in tRNAs with GU(N) anticodons (tRNA-Asp, -Asn, -His and -Tyr). Catalysis occurs through a double-displacement mechanism. The nucleophile active site attacks the C1' of nucleotide 34 to detach the guanine base from the RNA, forming a covalent enzyme-RNA intermediate. The proton acceptor active site deprotonates the incoming PreQ1, allowing a nucleophilic attack on the C1' of the ribose to form the product. After dissociation, two additional enzymatic reactions on the tRNA convert PreQ1 to queuine (Q), resulting in the hypermodified nucleoside queuosine (7-(((4,5-cis-dihydroxy-2-cyclopenten-1-yl)amino)methyl)-7-deazaguanosine). The sequence is that of Queuine tRNA-ribosyltransferase from Salmonella agona (strain SL483).